The chain runs to 316 residues: MKRHTRKIAIIGTGLVGSSCAYSIVNQGICEELLLIDINHERAVGEAMDLSHCINFTNTRTKVYAGSYEDCKDMDIVIITAGPAPKPGQSRLDTLGASAKIMESVVGGVMESGFDGIFLLASNPVDIITYQVWKLSGLPRNRVIGTGTSLDSSRLRTILSEMLHVDPRSIHGYSLGEHGDSQMVAWSHVTVGGKPILQILEEQKERFGEIDLDEIVEKTAKAGWEIYKRKGTTYYGIGNSLAYIANSIFNDDHRVIAVSAILDGEYGEYDICTGVPAIITRDGIREIVELNLTEDEESRFAKSNDILRDYMKTIGY.

4 residues coordinate NAD(+): valine 16, aspartate 37, arginine 42, and tyrosine 68. Arginine 91 provides a ligand contact to substrate. NAD(+)-binding positions include serine 104, 121 to 123 (ASN), and threonine 146. Position 123–126 (123–126 (NPVD)) interacts with substrate. 151 to 154 (DSSR) is a binding site for substrate. Arginine 156 and histidine 171 together coordinate beta-D-fructose 1,6-bisphosphate. The active-site Proton acceptor is the histidine 178. Threonine 233 is a binding site for substrate.

It belongs to the LDH/MDH superfamily. LDH family. In terms of assembly, homotetramer.

The protein localises to the cytoplasm. The catalysed reaction is (S)-lactate + NAD(+) = pyruvate + NADH + H(+). Its pathway is fermentation; pyruvate fermentation to lactate; (S)-lactate from pyruvate: step 1/1. Allosterically activated by fructose 1,6-bisphosphate (FBP). Functionally, catalyzes the conversion of lactate to pyruvate. The sequence is that of L-lactate dehydrogenase 3 from Bacillus thuringiensis subsp. konkukian (strain 97-27).